The chain runs to 233 residues: C-type lectin domain family 2 member D5 (233 aa).

A disordered region spans residues 1 to 52; sequence MPSSAHLQDPPPLLSRTLTQNEGQTSLRQSSSCGPSAASASESLSGSTESRI. At 1-76 the chain is on the cytoplasmic side; that stretch reads MPSSAHLQDP…PLEYPAGLYC (76 aa). Over residues 16–29 the composition is skewed to polar residues; sequence RTLTQNEGQTSLRQ. Positions 30–50 are enriched in low complexity; the sequence is SSSCGPSAASASESLSGSTES. The chain crosses the membrane as a helical; Signal-anchor for type II membrane protein span at residues 77–97; that stretch reads CYVVIIVLSVAVVALSVALSV. Over 98–233 the chain is Extracellular; sequence KKTAQISTIN…KPNSYTSQCL (136 aa). Positions 119-228 constitute a C-type lectin domain; the sequence is VGNKCFYFNE…KSICRKPNSY (110 aa). The N-linked (GlcNAc...) asparagine glycan is linked to Asn-132.

The protein localises to the cell membrane. Lectin-type cell surface receptor. In Rattus norvegicus (Rat), this protein is C-type lectin domain family 2 member D5 (Ocil).